Consider the following 64-residue polypeptide: Large ribosomal subunit protein bL33 (64 aa).

The protein belongs to the bacterial ribosomal protein bL33 family.

In Rippkaea orientalis (strain PCC 8801 / RF-1) (Cyanothece sp. (strain PCC 8801)), this protein is Large ribosomal subunit protein bL33.